The chain runs to 225 residues: NAD(P)H-quinone oxidoreductase subunit K, chloroplastic (225 aa).

The [4Fe-4S] cluster site is built by cysteine 43, cysteine 44, cysteine 108, and cysteine 139.

Belongs to the complex I 20 kDa subunit family. NDH is composed of at least 16 different subunits, 5 of which are encoded in the nucleus. Requires [4Fe-4S] cluster as cofactor.

The protein resides in the plastid. The protein localises to the chloroplast thylakoid membrane. The catalysed reaction is a plastoquinone + NADH + (n+1) H(+)(in) = a plastoquinol + NAD(+) + n H(+)(out). It carries out the reaction a plastoquinone + NADPH + (n+1) H(+)(in) = a plastoquinol + NADP(+) + n H(+)(out). NDH shuttles electrons from NAD(P)H:plastoquinone, via FMN and iron-sulfur (Fe-S) centers, to quinones in the photosynthetic chain and possibly in a chloroplast respiratory chain. The immediate electron acceptor for the enzyme in this species is believed to be plastoquinone. Couples the redox reaction to proton translocation, and thus conserves the redox energy in a proton gradient. This Triticum aestivum (Wheat) protein is NAD(P)H-quinone oxidoreductase subunit K, chloroplastic.